Here is a 146-residue protein sequence, read N- to C-terminus: ATP synthase F(0) complex subunit C2, mitochondrial (146 aa).

The transit peptide at 1–71 (MYACSKFVST…RSFQTSAISR (71 aa)) directs the protein to the mitochondrion. A helical membrane pass occupies residues 87–107 (VGVAGSGAGIGTVFGSLIIGY). An N6,N6,N6-trimethyllysine modification is found at lysine 114. Residues 122–142 (ILGFALSEAMGLFCLMVAFLI) form a helical membrane-spanning segment.

The protein belongs to the ATPase C chain family. As to quaternary structure, F-type ATPases have 2 components, CF(1) - the catalytic core - and CF(0) - the membrane proton channel. CF(1) has five subunits: alpha(3), beta(3), gamma(1), delta(1), epsilon(1). CF(0) has three main subunits: a, b and c. Interacts with DNAJC30; interaction is direct. Post-translationally, trimethylated by ATPSCKMT at Lys-114. Methylation is required for proper incorporation of the C subunit into the ATP synthase complex and mitochondrial respiration.

The protein resides in the mitochondrion membrane. In terms of biological role, mitochondrial membrane ATP synthase (F(1)F(0) ATP synthase or Complex V) produces ATP from ADP in the presence of a proton gradient across the membrane which is generated by electron transport complexes of the respiratory chain. F-type ATPases consist of two structural domains, F(1) - containing the extramembraneous catalytic core and F(0) - containing the membrane proton channel, linked together by a central stalk and a peripheral stalk. During catalysis, ATP synthesis in the catalytic domain of F(1) is coupled via a rotary mechanism of the central stalk subunits to proton translocation. Part of the complex F(0) domain. A homomeric c-ring of probably 10 subunits is part of the complex rotary element. The protein is ATP synthase F(0) complex subunit C2, mitochondrial of Mus musculus (Mouse).